A 94-amino-acid polypeptide reads, in one-letter code: Putative regulatory protein Sfum_3631 (94 aa).

This sequence belongs to the RemA family.

This Syntrophobacter fumaroxidans (strain DSM 10017 / MPOB) protein is Putative regulatory protein Sfum_3631.